The following is a 691-amino-acid chain: DNA ligase (691 aa).

Residues 41–45 (DAEYD), 90–91 (SL), and glutamate 130 each bind NAD(+). Lysine 132 serves as the catalytic N6-AMP-lysine intermediate. Positions 153, 190, 307, and 331 each coordinate NAD(+). Residues cysteine 425, cysteine 428, cysteine 443, and cysteine 449 each contribute to the Zn(2+) site. Positions 610–691 (APQGVLAGKT…LHQLLEGNTP (82 aa)) constitute a BRCT domain.

It belongs to the NAD-dependent DNA ligase family. LigA subfamily. Mg(2+) serves as cofactor. Mn(2+) is required as a cofactor.

It catalyses the reaction NAD(+) + (deoxyribonucleotide)n-3'-hydroxyl + 5'-phospho-(deoxyribonucleotide)m = (deoxyribonucleotide)n+m + AMP + beta-nicotinamide D-nucleotide.. Functionally, DNA ligase that catalyzes the formation of phosphodiester linkages between 5'-phosphoryl and 3'-hydroxyl groups in double-stranded DNA using NAD as a coenzyme and as the energy source for the reaction. It is essential for DNA replication and repair of damaged DNA. The polypeptide is DNA ligase (Burkholderia cenocepacia (strain ATCC BAA-245 / DSM 16553 / LMG 16656 / NCTC 13227 / J2315 / CF5610) (Burkholderia cepacia (strain J2315))).